We begin with the raw amino-acid sequence, 147 residues long: Hemoglobin subunit beta (147 aa).

N-acetylvaline is present on Val2. The Globin domain maps to 3–147; sequence HMSAEEKGIV…VAAALAHKYH (145 aa). Residue Thr13 is modified to Phosphothreonine. Position 45 is a phosphoserine (Ser45). Lys60 is subject to N6-acetyllysine. Position 64 (His64) interacts with heme b. An N6-acetyllysine modification is found at Lys83. His93 serves as a coordination point for heme b. Residue Cys94 is modified to S-nitrosocysteine. N6-acetyllysine is present on Lys145.

Belongs to the globin family. In terms of assembly, heterotetramer of two alpha chains and two beta chains. As to expression, red blood cells.

Involved in oxygen transport from the lung to the various peripheral tissues. This is Hemoglobin subunit beta (HBB) from Scalopus aquaticus (Eastern mole).